A 92-amino-acid polypeptide reads, in one-letter code: Large ribosomal subunit protein eL43 (92 aa).

Zn(2+)-binding residues include Cys39, Cys42, Cys57, and Cys60. The segment at Cys39–Cys60 adopts a C4-type zinc-finger fold.

It belongs to the eukaryotic ribosomal protein eL43 family. As to quaternary structure, component of the large ribosomal subunit.

The protein localises to the cytoplasm. Component of the large ribosomal subunit. The ribosome is a large ribonucleoprotein complex responsible for the synthesis of proteins in the cell. The sequence is that of Large ribosomal subunit protein eL43 (RPL37A) from Gallus gallus (Chicken).